A 253-amino-acid polypeptide reads, in one-letter code: Probable glutathione transferase omega-2 (253 aa).

The GST N-terminal domain occupies 25-105 (GIYRIYNMRF…YLDDLFPESR (81 aa)). The Nucleophile role is filled by C35. Glutathione is bound by residues K62, V75, and 89–90 (ES). Positions 110–238 (DPYEKVQQKL…SQPTEMGVGF (129 aa)) constitute a GST C-terminal domain.

This sequence belongs to the GST superfamily. Omega family.

It carries out the reaction RX + glutathione = an S-substituted glutathione + a halide anion + H(+). The enzyme catalyses L-dehydroascorbate + 2 glutathione = glutathione disulfide + L-ascorbate. It catalyses the reaction methylarsonate + 2 glutathione + H(+) = methylarsonous acid + glutathione disulfide + H2O. In terms of biological role, exhibits glutathione-dependent thiol transferase activity. Has dehydroascorbate reductase activity and may contribute to the recycling of ascorbic acid. Participates in the biotransformation of inorganic arsenic and reduces monomethylarsonic acid (MMA). The protein is Probable glutathione transferase omega-2 of Caenorhabditis briggsae.